The primary structure comprises 481 residues: Cysteine--tRNA ligase (481 aa).

C29 is a Zn(2+) binding site. The short motif at 31-41 (VTVYDHCHIGH) is the 'HIGH' region element. The Zn(2+) site is built by C209, H234, and E238. Residues 266–270 (KMSKS) carry the 'KMSKS' region motif. K269 serves as a coordination point for ATP.

It belongs to the class-I aminoacyl-tRNA synthetase family. Monomer. Requires Zn(2+) as cofactor.

The protein resides in the cytoplasm. It catalyses the reaction tRNA(Cys) + L-cysteine + ATP = L-cysteinyl-tRNA(Cys) + AMP + diphosphate. The protein is Cysteine--tRNA ligase of Geobacter sulfurreducens (strain ATCC 51573 / DSM 12127 / PCA).